The chain runs to 214 residues: Protein GrpE (214 aa).

Residues 1 to 13 (MKHTSEPTSQPDT) show a composition bias toward polar residues. The interval 1-61 (MKHTSEPTSQ…AAVAEATIEP (61 aa)) is disordered. Positions 14 to 57 (QAAESAQSSAAAAGQAASAYSSQAQRASADAQAIAGDEAAVAEA) are enriched in low complexity.

It belongs to the GrpE family. In terms of assembly, homodimer.

It is found in the cytoplasm. Functionally, participates actively in the response to hyperosmotic and heat shock by preventing the aggregation of stress-denatured proteins, in association with DnaK and GrpE. It is the nucleotide exchange factor for DnaK and may function as a thermosensor. Unfolded proteins bind initially to DnaJ; upon interaction with the DnaJ-bound protein, DnaK hydrolyzes its bound ATP, resulting in the formation of a stable complex. GrpE releases ADP from DnaK; ATP binding to DnaK triggers the release of the substrate protein, thus completing the reaction cycle. Several rounds of ATP-dependent interactions between DnaJ, DnaK and GrpE are required for fully efficient folding. This Ralstonia nicotianae (strain ATCC BAA-1114 / GMI1000) (Ralstonia solanacearum) protein is Protein GrpE.